The chain runs to 469 residues: Glutamate--tRNA ligase 2 (469 aa).

Positions Pro10–Ser20 match the 'HIGH' region motif. The short motif at Lys239–Arg243 is the 'KMSKS' region element. Lys242 is a binding site for ATP.

It belongs to the class-I aminoacyl-tRNA synthetase family. Glutamate--tRNA ligase type 1 subfamily. Monomer.

It is found in the cytoplasm. The enzyme catalyses tRNA(Glu) + L-glutamate + ATP = L-glutamyl-tRNA(Glu) + AMP + diphosphate. Functionally, catalyzes the attachment of glutamate to tRNA(Glu) in a two-step reaction: glutamate is first activated by ATP to form Glu-AMP and then transferred to the acceptor end of tRNA(Glu). The sequence is that of Glutamate--tRNA ligase 2 from Rickettsia typhi (strain ATCC VR-144 / Wilmington).